Consider the following 282-residue polypeptide: Ribosomal RNA small subunit methyltransferase A (282 aa).

S-adenosyl-L-methionine-binding residues include asparagine 28, leucine 30, glycine 55, glutamate 77, aspartate 103, and asparagine 123.

The protein belongs to the class I-like SAM-binding methyltransferase superfamily. rRNA adenine N(6)-methyltransferase family. RsmA subfamily.

Its subcellular location is the cytoplasm. The catalysed reaction is adenosine(1518)/adenosine(1519) in 16S rRNA + 4 S-adenosyl-L-methionine = N(6)-dimethyladenosine(1518)/N(6)-dimethyladenosine(1519) in 16S rRNA + 4 S-adenosyl-L-homocysteine + 4 H(+). Functionally, specifically dimethylates two adjacent adenosines (A1518 and A1519) in the loop of a conserved hairpin near the 3'-end of 16S rRNA in the 30S particle. May play a critical role in biogenesis of 30S subunits. The polypeptide is Ribosomal RNA small subunit methyltransferase A (Afipia carboxidovorans (strain ATCC 49405 / DSM 1227 / KCTC 32145 / OM5) (Oligotropha carboxidovorans)).